The following is a 221-amino-acid chain: Lipoprotein-releasing system ATP-binding protein LolD (221 aa).

The 215-residue stretch at 6 to 220 folds into the ABC transporter domain; it reads LILKKISKHY…YNLKNGLLNI (215 aa). 42-49 contributes to the ATP binding site; the sequence is GSSGSGKS.

This sequence belongs to the ABC transporter superfamily. Lipoprotein translocase (TC 3.A.1.125) family. As to quaternary structure, the complex is composed of two ATP-binding proteins (LolD) and two transmembrane proteins (LolC and LolE).

The protein resides in the cell inner membrane. Functionally, part of the ABC transporter complex LolCDE involved in the translocation of mature outer membrane-directed lipoproteins, from the inner membrane to the periplasmic chaperone, LolA. Responsible for the formation of the LolA-lipoprotein complex in an ATP-dependent manner. This Rickettsia typhi (strain ATCC VR-144 / Wilmington) protein is Lipoprotein-releasing system ATP-binding protein LolD.